A 282-amino-acid chain; its full sequence is Aminoglycoside 6-adenylyltransferase (282 aa).

The enzyme catalyses streptomycin + ATP = 6-O-adenylylstreptomycin + diphosphate. In terms of biological role, required for streptomycin resistance. Adenylates streptomycin on the O-6 residue. The chain is Aminoglycoside 6-adenylyltransferase from Staphylococcus aureus.